Consider the following 450-residue polypeptide: tRNA modification GTPase MnmE (450 aa).

Positions 23, 79, and 118 each coordinate (6S)-5-formyl-5,6,7,8-tetrahydrofolate. The 161-residue stretch at 214-374 (GITLILVGKP…LKEHILNKVG (161 aa)) folds into the TrmE-type G domain. Asn224 is a binding site for K(+). Residues 224–229 (NAGKSS), 243–249 (TSIAGTT), and 268–271 (DTAG) each bind GTP. Position 228 (Ser228) interacts with Mg(2+). 3 residues coordinate K(+): Thr243, Ile245, and Thr248. A Mg(2+)-binding site is contributed by Thr249. Lys450 contacts (6S)-5-formyl-5,6,7,8-tetrahydrofolate.

It belongs to the TRAFAC class TrmE-Era-EngA-EngB-Septin-like GTPase superfamily. TrmE GTPase family. As to quaternary structure, homodimer. Heterotetramer of two MnmE and two MnmG subunits. It depends on K(+) as a cofactor.

It localises to the cytoplasm. In terms of biological role, exhibits a very high intrinsic GTPase hydrolysis rate. Involved in the addition of a carboxymethylaminomethyl (cmnm) group at the wobble position (U34) of certain tRNAs, forming tRNA-cmnm(5)s(2)U34. The polypeptide is tRNA modification GTPase MnmE (Francisella tularensis subsp. tularensis (strain FSC 198)).